Here is a 412-residue protein sequence, read N- to C-terminus: POU domain, class 4, transcription factor 2 (412 aa).

Residues leucine 29 to proline 96 are disordered. The segment covering serine 31–alanine 53 has biased composition (low complexity). 2 stretches are compositionally biased toward gly residues: residues glycine 54–arginine 70 and glycine 78–serine 87. Positions cysteine 94 to histidine 240 are required for transcriptional activation. Residues arginine 113–isoleucine 122 carry the POU-IV box motif. Residues valine 123–leucine 191 form a disordered region. The span at lysine 127–proline 138 shows a compositional bias: basic residues. Positions proline 152–alanine 169 are enriched in low complexity. Positions threonine 173–proline 187 are enriched in basic residues. The Nuclear speckle targeting signal signature appears at histidine 174 to histidine 188. A required for DNA-binding and transcriptional repression region spans residues alanine 241 to isoleucine 412. The region spanning aspartate 253–glutamate 330 is the POU-specific domain. The homeobox DNA-binding region spans lysine 348–lysine 407.

It belongs to the POU transcription factor family. Class-4 subfamily. As to quaternary structure, interacts with POU4F1; this interaction inhibits both POU4F1 DNA-binding and transcriptional activities. Interacts (C-terminus) with ESR1 (via DNA-binding domain); this interaction increases the estrogen receptor ESR1 transcriptional activity in a DNA- and ligand 17-beta-estradiol-independent manner. Interacts (via C-terminus) with TP53 (via N-terminus). Interacts with DLX1 (via homeobox DNA-binding domain); this interaction suppresses DLX1-mediated transcriptional activity in postnatal retina enhancing retinal ganglion cell (RGC) differentiation. Interacts with DLX2 (via homeobox DNA-binding domain); this interaction enhances RGC differentiation. Interacts (via C-terminus) with ISL1 (via C-terminus). Interacts with ISL2. Interacts with LHX2. In terms of tissue distribution, expressed in the heart, brain and spinal cord. Expressed in cardiomyocytes (at protein level). Expressed in brain and spinal cord. Expressed in dorsal root ganglion (RGD) neurons.

Its subcellular location is the nucleus. The protein resides in the nucleus speckle. The protein localises to the cytoplasm. Its function is as follows. Tissue-specific DNA-binding transcription factor involved in the development and differentiation of target cells. Functions either as activator or repressor modulating the rate of target gene transcription through RNA polymerase II enzyme in a promoter-dependent manner. Binds to the consensus octamer motif 5'-AT[A/T]A[T/A]T[A/T]A-3' of promoter of target genes. Plays a fundamental role in the gene regulatory network essential for retinal ganglion cell (RGC) differentiation. Binds to an octamer site to form a ternary complex with ISL1; cooperates positively with ISL1 and ISL2 to potentiate transcriptional activation of RGC target genes being involved in RGC fate commitment in the developing retina and RGC axon formation and pathfinding. Inhibits DLX1 and DLX2 transcriptional activities preventing DLX1- and DLX2-mediated ability to promote amacrine cell fate specification. In cooperation with TP53 potentiates transcriptional activation of BAX promoter activity increasing neuronal cell apoptosis. Negatively regulates BAX promoter activity in the absence of TP53. Acts as a transcriptional coactivator via its interaction with the transcription factor ESR1 by enhancing its effect on estrogen response element (ERE)-containing promoter. Antagonizes the transcriptional stimulatory activity of POU4F1 by preventing its binding to an octamer motif. Involved in TNFSF11-mediated terminal osteoclast differentiation. The chain is POU domain, class 4, transcription factor 2 from Rattus norvegicus (Rat).